The sequence spans 80 residues: MARKKVALDFEQSLADLQTLVERLENGELSLEDSLTAFEQGIGLTRDCQSALAQAEQKVQVLLERDGELAEEPFDAEQPE.

This sequence belongs to the XseB family. As to quaternary structure, heterooligomer composed of large and small subunits.

It is found in the cytoplasm. It carries out the reaction Exonucleolytic cleavage in either 5'- to 3'- or 3'- to 5'-direction to yield nucleoside 5'-phosphates.. Functionally, bidirectionally degrades single-stranded DNA into large acid-insoluble oligonucleotides, which are then degraded further into small acid-soluble oligonucleotides. The sequence is that of Exodeoxyribonuclease 7 small subunit from Pseudomonas fluorescens (strain SBW25).